Consider the following 116-residue polypeptide: Ribosome-binding factor A (116 aa).

Belongs to the RbfA family. Monomer. Binds 30S ribosomal subunits, but not 50S ribosomal subunits or 70S ribosomes.

Its subcellular location is the cytoplasm. In terms of biological role, one of several proteins that assist in the late maturation steps of the functional core of the 30S ribosomal subunit. Associates with free 30S ribosomal subunits (but not with 30S subunits that are part of 70S ribosomes or polysomes). Required for efficient processing of 16S rRNA. May interact with the 5'-terminal helix region of 16S rRNA. The polypeptide is Ribosome-binding factor A (Streptococcus mutans serotype c (strain ATCC 700610 / UA159)).